The sequence spans 194 residues: Leucyl/phenylalanyl-tRNA--protein transferase (194 aa).

Belongs to the L/F-transferase family.

Its subcellular location is the cytoplasm. It carries out the reaction N-terminal L-lysyl-[protein] + L-leucyl-tRNA(Leu) = N-terminal L-leucyl-L-lysyl-[protein] + tRNA(Leu) + H(+). The catalysed reaction is N-terminal L-arginyl-[protein] + L-leucyl-tRNA(Leu) = N-terminal L-leucyl-L-arginyl-[protein] + tRNA(Leu) + H(+). The enzyme catalyses L-phenylalanyl-tRNA(Phe) + an N-terminal L-alpha-aminoacyl-[protein] = an N-terminal L-phenylalanyl-L-alpha-aminoacyl-[protein] + tRNA(Phe). Functions in the N-end rule pathway of protein degradation where it conjugates Leu, Phe and, less efficiently, Met from aminoacyl-tRNAs to the N-termini of proteins containing an N-terminal arginine or lysine. The sequence is that of Leucyl/phenylalanyl-tRNA--protein transferase from Chlorobium phaeobacteroides (strain DSM 266 / SMG 266 / 2430).